The sequence spans 634 residues: MSKVIGIDLGTTNSCVSVYERGESKIIPNKEGKNTTPSVVAFTDKGEILVGDSAKRQAVTNPEKTIYSIKRIMGLMMNEKNAQEAKKRLPYKIVDRNGACAVEIAGKVYTPQEISAKVLMKLKEDAESYLGEKVVDAVITVPAYFNDSQRKATKEAGTIAGLNVLRIINEPTAAALAYGLDKKESERIVVYDLGGGTFDVTVLETGDSVVEVLATGGNAFLGGDDFDNKLIDYLLSEFKNESGIDIKGDVMAMQRLKEAAENAKKELSSAMETTVNLPFITADQTGPKHLMKTISRAKFEGMIDNLVGETISTLNSVVSDAGLKMSDIKEVVMVGGSTRVPLVCEEVKKAFGKDLNKSVNPDEVVAVGAAVQGAVIKGDVKDVLLLDVTPLSLGIETLGGIMTKLIDKGTTIPTKKSQVFSTAEDNQSAVTINVLQGEREFARDNKSLGNFNLDGIMPAPRGVPQIEVEFDIDANGILTVSAKDKATGKATDIKITGSSGLSDEEIDKMVKDAELHKEDDKKRKESVDARNGADAIAHQTEKTLNEMGEKIPADLRAKIEAALNDLKAVLKDENATKEQIDAKVSALSKTAEEMYKAASAGKNAGGTAGGNGNAGSNGNSGAKKDDDVIDAEVE.

Thr197 is modified (phosphothreonine; by autocatalysis). Residues 515 to 528 (LHKEDDKKRKESVD) are compositionally biased toward basic and acidic residues. 2 disordered regions span residues 515 to 536 (LHKE…ADAI) and 595 to 634 (YKAA…AEVE). Residues 603 to 615 (NAGGTAGGNGNAG) are compositionally biased toward gly residues.

The protein belongs to the heat shock protein 70 family.

Its function is as follows. Acts as a chaperone. The chain is Chaperone protein DnaK from Campylobacter hominis (strain ATCC BAA-381 / DSM 21671 / CCUG 45161 / LMG 19568 / NCTC 13146 / CH001A).